The sequence spans 121 residues: uncharacterized protein (121 aa).

This is an uncharacterized protein from Archaeoglobus fulgidus (strain ATCC 49558 / DSM 4304 / JCM 9628 / NBRC 100126 / VC-16).